The following is a 347-amino-acid chain: UPF0284 protein M164_0030 (347 aa).

It belongs to the UPF0284 family.

In Saccharolobus islandicus (strain M.16.4 / Kamchatka #3) (Sulfolobus islandicus), this protein is UPF0284 protein M164_0030.